The primary structure comprises 66 residues: Large ribosomal subunit protein uL29 (66 aa).

This sequence belongs to the universal ribosomal protein uL29 family.

This is Large ribosomal subunit protein uL29 from Ruegeria sp. (strain TM1040) (Silicibacter sp.).